The primary structure comprises 254 residues: Small ribosomal subunit protein uS3 (254 aa).

The 71-residue stretch at 39 to 109 folds into the KH type-2 domain; sequence IRNYISARLK…EVKIDVIEVI (71 aa). A disordered region spans residues 220–254; that stretch reads EEMKKMQERRNDSRGRGRGDGRGAKRRRRPAAKKA. Basic and acidic residues predominate over residues 221 to 242; that stretch reads EMKKMQERRNDSRGRGRGDGRG. Basic residues predominate over residues 243-254; it reads AKRRRRPAAKKA.

This sequence belongs to the universal ribosomal protein uS3 family. In terms of assembly, part of the 30S ribosomal subunit. Forms a tight complex with proteins S10 and S14.

In terms of biological role, binds the lower part of the 30S subunit head. Binds mRNA in the 70S ribosome, positioning it for translation. This is Small ribosomal subunit protein uS3 from Chlorobaculum parvum (strain DSM 263 / NCIMB 8327) (Chlorobium vibrioforme subsp. thiosulfatophilum).